A 77-amino-acid chain; its full sequence is Sec-independent protein translocase protein TatA (77 aa).

A helical membrane pass occupies residues 3-23; the sequence is VFGIGLPELIVILVVALLIFG. The tract at residues 56–77 is disordered; the sequence is TAALEEEQQAKAEAESPREISP. A compositionally biased stretch (basic and acidic residues) spans 63-77; the sequence is QQAKAEAESPREISP.

Belongs to the TatA/E family. As to quaternary structure, forms a complex with TatC.

The protein localises to the cell inner membrane. In terms of biological role, part of the twin-arginine translocation (Tat) system that transports large folded proteins containing a characteristic twin-arginine motif in their signal peptide across membranes. TatA could form the protein-conducting channel of the Tat system. In Thermosynechococcus vestitus (strain NIES-2133 / IAM M-273 / BP-1), this protein is Sec-independent protein translocase protein TatA.